A 503-amino-acid chain; its full sequence is Maturase K (503 aa).

The protein belongs to the intron maturase 2 family. MatK subfamily.

The protein resides in the plastid. It is found in the chloroplast. In terms of biological role, usually encoded in the trnK tRNA gene intron. Probably assists in splicing its own and other chloroplast group II introns. This Eucalyptus globulus subsp. globulus (Tasmanian blue gum) protein is Maturase K.